A 122-amino-acid chain; its full sequence is Large ribosomal subunit protein uL14 (122 aa).

This sequence belongs to the universal ribosomal protein uL14 family. Part of the 50S ribosomal subunit. Forms a cluster with proteins L3 and L19. In the 70S ribosome, L14 and L19 interact and together make contacts with the 16S rRNA in bridges B5 and B8.

Functionally, binds to 23S rRNA. Forms part of two intersubunit bridges in the 70S ribosome. The sequence is that of Large ribosomal subunit protein uL14 from Dechloromonas aromatica (strain RCB).